The following is a 476-amino-acid chain: Glycogen synthase (476 aa).

ADP-alpha-D-glucose is bound at residue Lys15.

Belongs to the glycosyltransferase 1 family. Bacterial/plant glycogen synthase subfamily.

It catalyses the reaction [(1-&gt;4)-alpha-D-glucosyl](n) + ADP-alpha-D-glucose = [(1-&gt;4)-alpha-D-glucosyl](n+1) + ADP + H(+). It participates in glycan biosynthesis; glycogen biosynthesis. In terms of biological role, synthesizes alpha-1,4-glucan chains using ADP-glucose. The sequence is that of Glycogen synthase from Actinobacillus succinogenes (strain ATCC 55618 / DSM 22257 / CCUG 43843 / 130Z).